The chain runs to 352 residues: Histidinol-phosphate aminotransferase (352 aa).

At K211 the chain carries N6-(pyridoxal phosphate)lysine.

This sequence belongs to the class-II pyridoxal-phosphate-dependent aminotransferase family. Histidinol-phosphate aminotransferase subfamily. Homodimer. Pyridoxal 5'-phosphate is required as a cofactor.

It carries out the reaction L-histidinol phosphate + 2-oxoglutarate = 3-(imidazol-4-yl)-2-oxopropyl phosphate + L-glutamate. Its pathway is amino-acid biosynthesis; L-histidine biosynthesis; L-histidine from 5-phospho-alpha-D-ribose 1-diphosphate: step 7/9. The chain is Histidinol-phosphate aminotransferase from Haemophilus influenzae (strain PittGG).